A 30-amino-acid chain; its full sequence is Cycloviolacin-O7 (30 aa).

Residues 1–30 (SIPCGESCVWIPCTITALAGCKCKSKVCYN) constitute a cross-link (cyclopeptide (Ser-Asn)). Disulfide bonds link Cys4–Cys21, Cys8–Cys23, and Cys13–Cys28.

In terms of processing, this is a cyclic peptide.

Functionally, probably participates in a plant defense mechanism. The sequence is that of Cycloviolacin-O7 from Viola odorata (Sweet violet).